The following is a 305-amino-acid chain: MIRQRTLKSIVQMTGVGLHSGRKVTLTLRPAAANTGVIYRRTDLNPPVDFPADPESVRDTMLCTALVNDEGVRISTVEHLNAALAGMGIDNVVIEVDAPEIPIMDGSASPFVYLLQSAGIEELNTAKKFIRIKKPVRIEDGDKWAEIRPYNGFRLDFTIDFNHPAIESDDQKLVFDFSSQSFIKDISRARTFGFMRDIEYLQSQNLCLGGSFDCAIVLDDYRILNEDGLRFDNEFVTHKVLDAVGDLYMSGHSILGELRAYKSGHALNNQLLRAVLADQEAWEWTTIEDEQESPVAFMQPGMVLA.

Zn(2+) contacts are provided by His-79, His-238, and Asp-242. His-265 serves as the catalytic Proton donor.

It belongs to the LpxC family. Zn(2+) is required as a cofactor.

The catalysed reaction is a UDP-3-O-[(3R)-3-hydroxyacyl]-N-acetyl-alpha-D-glucosamine + H2O = a UDP-3-O-[(3R)-3-hydroxyacyl]-alpha-D-glucosamine + acetate. Its pathway is glycolipid biosynthesis; lipid IV(A) biosynthesis; lipid IV(A) from (3R)-3-hydroxytetradecanoyl-[acyl-carrier-protein] and UDP-N-acetyl-alpha-D-glucosamine: step 2/6. Functionally, catalyzes the hydrolysis of UDP-3-O-myristoyl-N-acetylglucosamine to form UDP-3-O-myristoylglucosamine and acetate, the committed step in lipid A biosynthesis. The chain is UDP-3-O-acyl-N-acetylglucosamine deacetylase from Aliivibrio fischeri (strain ATCC 700601 / ES114) (Vibrio fischeri).